Consider the following 389-residue polypeptide: Cytochrome B translational activator CBS2 (389 aa).

Its subcellular location is the mitochondrion. Its function is as follows. Translational activator of cytochrome b. The cytochrome b (coB) leader RNA may represent the target sequence for CBS1 and/ or CBS2. This Saccharomyces cerevisiae (strain ATCC 204508 / S288c) (Baker's yeast) protein is Cytochrome B translational activator CBS2 (CBS2).